The following is a 617-amino-acid chain: MGNDKTNMFVAIGLSLLVLLGWQYFVAGPRMEQQRQIEAQNKAAQQQPPGVTPDGVPSPSPKEGGPAAPAPGTLPTAQGGPVSREAALARSPRVRIETPALSGSIALKGGRVDDVSLKNYHETIDPKSPEIVLFSPAGTETPYYAEFGWVGANAGPLPTNDTLWTSDGKTLSPGMPVTLTWDNGAGLVFKRIIAVDDKYMFTIRDEVENKGSGAITLYPYSLVSRWGKPHTQGYYVLHEGMIGYLGNDGLQEFTYDKLAKEGAYGGANTKGKAWTGVTGGFVGITDKYWAAAAIPDQDTPYTGAFTDRTDGATNVYQASVRGDAVNLAAGASATATQRLFAGAKEVNVINNYEKDLGIKHFDLMIDWGWFFFITKPMFRALDFFYHLFGNFGVSILVVTFCLKLLFLPIANRSYVSMAKMKAVQPEMAAIRERYKDDRMKQQQATMELYKKEKINPVAGCWPVLIQIPVFFALYKVLFITIEMRHAPFFGWIRDLAAPDPTSIVNLFGLLPFPAPDFVHLGVWPIIMGITMFVQMKMNPAPPDPVQAQIFTFMPIVFTFMLGSFPAGLVIYWAWNNTLSVIQQYVIMRRNGVKVELWDNLRSTFRRGNGTKAAATKS.

A helical membrane pass occupies residues 8-28 (MFVAIGLSLLVLLGWQYFVAG). Positions 36–49 (QIEAQNKAAQQQPP) are enriched in polar residues. The interval 36-91 (QIEAQNKAAQQQPPGVTPDGVPSPSPKEGGPAAPAPGTLPTAQGGPVSREAALARS) is disordered. Low complexity predominate over residues 61 to 81 (PKEGGPAAPAPGTLPTAQGGP). The next 4 membrane-spanning stretches (helical) occupy residues 387–407 (LFGN…LLFL), 461–481 (WPVL…FITI), 517–533 (FVHL…TMFV), and 549–569 (IFTF…AGLV).

This sequence belongs to the OXA1/ALB3/YidC family. Type 1 subfamily. Interacts with the Sec translocase complex via SecD. Specifically interacts with transmembrane segments of nascent integral membrane proteins during membrane integration.

The protein resides in the cell inner membrane. Functionally, required for the insertion and/or proper folding and/or complex formation of integral membrane proteins into the membrane. Involved in integration of membrane proteins that insert both dependently and independently of the Sec translocase complex, as well as at least some lipoproteins. Aids folding of multispanning membrane proteins. The polypeptide is Membrane protein insertase YidC (Methylobacterium radiotolerans (strain ATCC 27329 / DSM 1819 / JCM 2831 / NBRC 15690 / NCIMB 10815 / 0-1)).